The sequence spans 547 residues: Nitrosoguanidine resistance protein SNG1 (547 aa).

The interval asparagine 35 to leucine 86 is disordered. The segment covering lysine 50–proline 62 has biased composition (basic and acidic residues). A Phosphothreonine modification is found at threonine 91. 8 helical membrane passes run phenylalanine 109–glycine 129, isoleucine 159–alanine 179, isoleucine 318–leucine 338, leucine 363–phenylalanine 383, glycine 394–asparagine 414, leucine 418–isoleucine 438, tyrosine 457–leucine 477, and isoleucine 488–glycine 508. The span at alanine 526–alanine 536 shows a compositional bias: low complexity. A disordered region spans residues alanine 526–asparagine 547.

The protein to yeast YJR015W.

The protein localises to the membrane. May function as a N-methyl-N'nitro-N-nitrosoguanidine (MNNG) export permease. The protein is Nitrosoguanidine resistance protein SNG1 (SNG1) of Saccharomyces cerevisiae (strain ATCC 204508 / S288c) (Baker's yeast).